Reading from the N-terminus, the 410-residue chain is LL-diaminopimelate aminotransferase (410 aa).

Residues Tyr15 and Gly42 each coordinate substrate. Pyridoxal 5'-phosphate is bound by residues Tyr72, Ser108–Lys109, Tyr132, Asn187, Tyr218, and Ser246–Ser248. Lys109, Tyr132, and Asn187 together coordinate substrate. The residue at position 249 (Lys249) is an N6-(pyridoxal phosphate)lysine. Pyridoxal 5'-phosphate is bound by residues Arg257 and Asn292. Substrate is bound by residues Asn292 and Arg388.

It belongs to the class-I pyridoxal-phosphate-dependent aminotransferase family. LL-diaminopimelate aminotransferase subfamily. In terms of assembly, homodimer. Pyridoxal 5'-phosphate is required as a cofactor.

It catalyses the reaction (2S,6S)-2,6-diaminopimelate + 2-oxoglutarate = (S)-2,3,4,5-tetrahydrodipicolinate + L-glutamate + H2O + H(+). The protein operates within amino-acid biosynthesis; L-lysine biosynthesis via DAP pathway; LL-2,6-diaminopimelate from (S)-tetrahydrodipicolinate (aminotransferase route): step 1/1. Involved in the synthesis of meso-diaminopimelate (m-DAP or DL-DAP), required for both lysine and peptidoglycan biosynthesis. Catalyzes the direct conversion of tetrahydrodipicolinate to LL-diaminopimelate. The polypeptide is LL-diaminopimelate aminotransferase (Syntrophotalea carbinolica (strain DSM 2380 / NBRC 103641 / GraBd1) (Pelobacter carbinolicus)).